The following is a 560-amino-acid chain: DNA ligase B (560 aa).

Residue K128 is the N6-AMP-lysine intermediate of the active site.

It belongs to the NAD-dependent DNA ligase family. LigB subfamily.

The catalysed reaction is NAD(+) + (deoxyribonucleotide)n-3'-hydroxyl + 5'-phospho-(deoxyribonucleotide)m = (deoxyribonucleotide)n+m + AMP + beta-nicotinamide D-nucleotide.. Functionally, catalyzes the formation of phosphodiester linkages between 5'-phosphoryl and 3'-hydroxyl groups in double-stranded DNA using NAD as a coenzyme and as the energy source for the reaction. This Azotobacter vinelandii (strain DJ / ATCC BAA-1303) protein is DNA ligase B.